Consider the following 156-residue polypeptide: Transcriptional repressor NrdR (156 aa).

A zinc finger lies at 3–34 (CPSCQFNGTRVVDSRPVDDNKEIRRRRECESC). The ATP-cone domain maps to 49 to 139 (LVVVKKEGSR…VYRQFKDINV (91 aa)).

The protein belongs to the NrdR family. Zn(2+) serves as cofactor.

Its function is as follows. Negatively regulates transcription of bacterial ribonucleotide reductase nrd genes and operons by binding to NrdR-boxes. The chain is Transcriptional repressor NrdR from Lysinibacillus sphaericus (strain C3-41).